Consider the following 508-residue polypeptide: Photosystem II CP47 reaction center protein (508 aa).

6 consecutive transmembrane segments (helical) span residues 21-36, 101-115, 140-156, 203-218, 237-252, and 457-472; these read SVHI…WAGS, IMFS…IWHW, GIHL…FGAF, IAAG…FHLS, VLSS…AFVV, and SFAL…HGAR.

Belongs to the PsbB/PsbC family. PsbB subfamily. PSII is composed of 1 copy each of membrane proteins PsbA, PsbB, PsbC, PsbD, PsbE, PsbF, PsbH, PsbI, PsbJ, PsbK, PsbL, PsbM, PsbT, PsbX, PsbY, PsbZ, Psb30/Ycf12, at least 3 peripheral proteins of the oxygen-evolving complex and a large number of cofactors. It forms dimeric complexes. Requires Binds multiple chlorophylls. PSII binds additional chlorophylls, carotenoids and specific lipids. as cofactor.

It is found in the plastid. The protein resides in the chloroplast thylakoid membrane. Functionally, one of the components of the core complex of photosystem II (PSII). It binds chlorophyll and helps catalyze the primary light-induced photochemical processes of PSII. PSII is a light-driven water:plastoquinone oxidoreductase, using light energy to abstract electrons from H(2)O, generating O(2) and a proton gradient subsequently used for ATP formation. In Guizotia abyssinica (Niger), this protein is Photosystem II CP47 reaction center protein.